The chain runs to 462 residues: Cysteine--tRNA ligase (462 aa).

Position 30 (cysteine 30) interacts with Zn(2+). Residues 32–42 carry the 'HIGH' region motif; it reads MTVYDYCHIGH. Zn(2+) is bound by residues cysteine 214, histidine 239, and glutamate 243. The 'KMSKS' region motif lies at 271 to 275; sequence KMSKS. Lysine 274 contributes to the ATP binding site.

It belongs to the class-I aminoacyl-tRNA synthetase family. As to quaternary structure, monomer. The cofactor is Zn(2+).

Its subcellular location is the cytoplasm. The enzyme catalyses tRNA(Cys) + L-cysteine + ATP = L-cysteinyl-tRNA(Cys) + AMP + diphosphate. The sequence is that of Cysteine--tRNA ligase from Herminiimonas arsenicoxydans.